The following is a 255-amino-acid chain: Thiazole synthase (255 aa).

Lys96 serves as the catalytic Schiff-base intermediate with DXP. 1-deoxy-D-xylulose 5-phosphate-binding positions include Gly157, 183-184 (AG), and 205-206 (NT).

It belongs to the ThiG family. In terms of assembly, homotetramer. Forms heterodimers with either ThiH or ThiS.

The protein resides in the cytoplasm. It carries out the reaction [ThiS sulfur-carrier protein]-C-terminal-Gly-aminoethanethioate + 2-iminoacetate + 1-deoxy-D-xylulose 5-phosphate = [ThiS sulfur-carrier protein]-C-terminal Gly-Gly + 2-[(2R,5Z)-2-carboxy-4-methylthiazol-5(2H)-ylidene]ethyl phosphate + 2 H2O + H(+). It functions in the pathway cofactor biosynthesis; thiamine diphosphate biosynthesis. Catalyzes the rearrangement of 1-deoxy-D-xylulose 5-phosphate (DXP) to produce the thiazole phosphate moiety of thiamine. Sulfur is provided by the thiocarboxylate moiety of the carrier protein ThiS. In vitro, sulfur can be provided by H(2)S. The protein is Thiazole synthase of Staphylococcus epidermidis (strain ATCC 12228 / FDA PCI 1200).